An 827-amino-acid polypeptide reads, in one-letter code: MRGCLRLALLCALPWLLLAASPGHPAKSPRQPPAPRRDPFDAARGADFDHVYSGVVNLSTENIYSFNYTSQPDQVTAVRVYVNSSSENLNYPVLVVVRQQKEVLSWQVPLLFQGLYQRSYNYQEVSRTLCPSEATNETGPLQQLIFVDVASMAPLGAQYKLLVTKLKHFQLRTNVAFHFTASPSQPQYFLYKFPKDVDSVIIKVVSEMAYPCSVVSVQNIMCPVYDLDHNVEFNGVYQSMTKKAAITLQKKDFPGEQFFVVFVIKPEDYACGGSFFIQEKENQTWNLQRKKNLEVTIVPSIKESVYVKSSLFSVFIFLSFYLGCLLVGFVHYLRFQRKSIDGSFGSNDGSGNMVASHPIAASTPEGSNYGTIDESSSSPGRQMSSSDGGPPGQSDTDSSVEESDFDTMPDIESDKNIIRTKMFLYLSDLSRKDRRIVSKKYKIYFWNIITIAVFYALPVIQLVITYQTVVNVTGNQDICYYNFLCAHPLGVLSAFNNILSNLGHVLLGFLFLLIVLRRDILHRRALEAKDIFAVEYGIPKHFGLFYAMGIALMMEGVLSACYHVCPNYSNFQFDTSFMYMIAGLCMLKLYQTRHPDINASAYSAYASFAVVIMVTVLGVVFGKNDVWFWVIFSAIHVLASLALSTQIYYMGRFKIDLGIFRRAAMVFYTDCIQQCSRPLYMDRMVLLVVGNLVNWSFALFGLIYRPRDFASYMLGIFICNLLLYLAFYIIMKLRSSEKVLPVPLFCIVATAVMWAAALYFFFQNLSSWEGTPAESREKNRECILLDFFDDHDIWHFLSATALFFSFLVLLTLDDDLDVVRRDQIPVF.

An N-terminal signal peptide occupies residues 1–19 (MRGCLRLALLCALPWLLLA). The Extracellular portion of the chain corresponds to 20–309 (ASPGHPAKSP…SIKESVYVKS (290 aa)). N-linked (GlcNAc...) asparagine glycans are attached at residues Asn57, Asn67, Asn83, Asn136, and Asn282. The helical transmembrane segment at 310 to 330 (SLFSVFIFLSFYLGCLLVGFV) threads the bilayer. Topologically, residues 331–442 (HYLRFQRKSI…DRRIVSKKYK (112 aa)) are cytoplasmic. The tract at residues 355–408 (ASHPIAASTPEGSNYGTIDESSSSPGRQMSSSDGGPPGQSDTDSSVEESDFDTM) is disordered. Over residues 364-374 (PEGSNYGTIDE) the composition is skewed to polar residues. A compositionally biased stretch (low complexity) spans 375–397 (SSSSPGRQMSSSDGGPPGQSDTD). The span at 398–408 (SSVEESDFDTM) shows a compositional bias: acidic residues. A helical membrane pass occupies residues 443–463 (IYFWNIITIAVFYALPVIQLV). Residues 464–494 (ITYQTVVNVTGNQDICYYNFLCAHPLGVLSA) are Extracellular-facing. Asn471 is a glycosylation site (N-linked (GlcNAc...) asparagine). The helical transmembrane segment at 495 to 515 (FNNILSNLGHVLLGFLFLLIV) threads the bilayer. The Cytoplasmic segment spans residues 516–541 (LRRDILHRRALEAKDIFAVEYGIPKH). Residues 542 to 562 (FGLFYAMGIALMMEGVLSACY) traverse the membrane as a helical segment. Residues 563–572 (HVCPNYSNFQ) lie on the Extracellular side of the membrane. Asn567 is a glycosylation site (N-linked (GlcNAc...) asparagine). A helical transmembrane segment spans residues 573-590 (FDTSFMYMIAGLCMLKLY). The Cytoplasmic segment spans residues 591-600 (QTRHPDINAS). Residues 601-621 (AYSAYASFAVVIMVTVLGVVF) traverse the membrane as a helical segment. At 622 to 626 (GKNDV) the chain is on the extracellular side. Residues 627-647 (WFWVIFSAIHVLASLALSTQI) form a helical membrane-spanning segment. Residues 648 to 683 (YYMGRFKIDLGIFRRAAMVFYTDCIQQCSRPLYMDR) are Cytoplasmic-facing. The chain crosses the membrane as a helical span at residues 684–704 (MVLLVVGNLVNWSFALFGLIY). Residues 705–710 (RPRDFA) are Extracellular-facing. A helical transmembrane segment spans residues 711–731 (SYMLGIFICNLLLYLAFYIIM). The Cytoplasmic segment spans residues 732-741 (KLRSSEKVLP). Residues 742-762 (VPLFCIVATAVMWAAALYFFF) traverse the membrane as a helical segment. Residues 763-791 (QNLSSWEGTPAESREKNRECILLDFFDDH) are Extracellular-facing. Asn764 carries N-linked (GlcNAc...) asparagine glycosylation. A helical transmembrane segment spans residues 792 to 812 (DIWHFLSATALFFSFLVLLTL). At 813 to 827 (DDDLDVVRRDQIPVF) the chain is on the cytoplasmic side.

The protein belongs to the SID1 family.

The protein resides in the membrane. Its function is as follows. In vitro binds long double-stranded RNA (dsRNA) (500 and 700 base pairs), but not dsRNA shorter than 300 bp. Not involved in RNA autophagy, a process in which RNA is directly imported into lysosomes in an ATP-dependent manner, and degraded. The sequence is that of SID1 transmembrane family member 1 (SIDT1) from Homo sapiens (Human).